Here is a 78-residue protein sequence, read N- to C-terminus: Small ribosomal subunit protein bS16c (78 aa).

Belongs to the bacterial ribosomal protein bS16 family.

Its subcellular location is the plastid. It localises to the chloroplast. The chain is Small ribosomal subunit protein bS16c from Phaeodactylum tricornutum (strain CCAP 1055/1).